The primary structure comprises 311 residues: Glycine--tRNA ligase alpha subunit (311 aa).

Belongs to the class-II aminoacyl-tRNA synthetase family. In terms of assembly, tetramer of two alpha and two beta subunits.

It is found in the cytoplasm. It catalyses the reaction tRNA(Gly) + glycine + ATP = glycyl-tRNA(Gly) + AMP + diphosphate. The chain is Glycine--tRNA ligase alpha subunit from Bradyrhizobium diazoefficiens (strain JCM 10833 / BCRC 13528 / IAM 13628 / NBRC 14792 / USDA 110).